Consider the following 676-residue polypeptide: Protein TAPT1 homolog (676 aa).

The tract at residues 1–44 (MNATLNSAGGKRQLRFRGDVTGSRVEELHHQQQEEQKQKAPLAQ) is disordered. The span at 24-38 (RVEELHHQQQEEQKQ) shows a compositional bias: basic and acidic residues. Helical transmembrane passes span 128–148 (SFLY…WALV), 170–190 (EICD…MLLV), 249–269 (VLTH…LIMF), 346–366 (FCVM…IDWV), 414–434 (GFIP…AVSF), and 437–457 (LAAW…RICL). Residues 625 to 676 (SGDGVTSAKAKKATQRLPKRTHKRSESEPGMPSMVEKGGAAGIAGGNQTTQL) form a disordered region. The span at 633–647 (KAKKATQRLPKRTHK) shows a compositional bias: basic residues.

It belongs to the TAPT1 family.

It is found in the membrane. The protein is Protein TAPT1 homolog of Drosophila melanogaster (Fruit fly).